Consider the following 369-residue polypeptide: Probable dual-specificity RNA methyltransferase RlmN (369 aa).

Glu-106 functions as the Proton acceptor in the catalytic mechanism. The region spanning 118-354 (EARRLTVCVS…VTVRRSRGQD (237 aa)) is the Radical SAM core domain. Cys-125 and Cys-359 are joined by a disulfide. Positions 132, 136, and 139 each coordinate [4Fe-4S] cluster. Residues 183–184 (GE), Ser-215, 238–240 (SLH), and Asn-316 contribute to the S-adenosyl-L-methionine site. The S-methylcysteine intermediate role is filled by Cys-359.

Belongs to the radical SAM superfamily. RlmN family. [4Fe-4S] cluster serves as cofactor.

Its subcellular location is the cytoplasm. The catalysed reaction is adenosine(2503) in 23S rRNA + 2 reduced [2Fe-2S]-[ferredoxin] + 2 S-adenosyl-L-methionine = 2-methyladenosine(2503) in 23S rRNA + 5'-deoxyadenosine + L-methionine + 2 oxidized [2Fe-2S]-[ferredoxin] + S-adenosyl-L-homocysteine. It catalyses the reaction adenosine(37) in tRNA + 2 reduced [2Fe-2S]-[ferredoxin] + 2 S-adenosyl-L-methionine = 2-methyladenosine(37) in tRNA + 5'-deoxyadenosine + L-methionine + 2 oxidized [2Fe-2S]-[ferredoxin] + S-adenosyl-L-homocysteine. In terms of biological role, specifically methylates position 2 of adenine 2503 in 23S rRNA and position 2 of adenine 37 in tRNAs. The sequence is that of Probable dual-specificity RNA methyltransferase RlmN from Salinibacter ruber (strain DSM 13855 / M31).